We begin with the raw amino-acid sequence, 117 residues long: Large ribosomal subunit protein bL19 (117 aa).

It belongs to the bacterial ribosomal protein bL19 family.

In terms of biological role, this protein is located at the 30S-50S ribosomal subunit interface and may play a role in the structure and function of the aminoacyl-tRNA binding site. This Alkaliphilus metalliredigens (strain QYMF) protein is Large ribosomal subunit protein bL19.